Reading from the N-terminus, the 463-residue chain is Glutathione amide reductase (463 aa).

The Ni(2+) site is built by Thr2, Gln3, and His4. Residues 14–15 (SG), Glu34, and Thr41 each bind FAD. Cys42 and Cys47 are disulfide-bonded. FAD contacts are provided by residues Lys50 and 113–114 (HA). Lys50 serves as a coordination point for NAD(+). NAD(+) contacts are provided by residues 174–180 (AGYIGIE), 197–198 (LE), Val230, and Gly261. FAD contacts are provided by residues Asp302 and 308 to 310 (QLT). NAD(+) contacts are provided by Gln308 and Val341. Residue His437 participates in FAD binding. Catalysis depends on His437, which acts as the Proton acceptor.

Belongs to the class-I pyridine nucleotide-disulfide oxidoreductase family. In terms of assembly, homodimer. FAD serves as cofactor.

The enzyme catalyses 2 glutathione amide + NAD(+) = glutathione amide disulfide + NADH + H(+). Its function is as follows. Catalyzes the reduction of glutathione amide disulfide (GASSAG) to restore glutathione amide (GASH) in the presence of NADH. May play a role in GASH metabolism under anaerobic conditions as a sulfide carrier necessary for cytoplasmic sulfide oxidation. The sequence is that of Glutathione amide reductase from Marichromatium gracile (Chromatium gracile).